The primary structure comprises 114 residues: MNQYETVFILTPVLSDVQMKEAVEKFKGILQAEGAEIINEENWGLKKLAYPIQKKSTGFYQLVEFNADPTVIDKLELNFRRDERVIRFLTFKMDKYAAEYAAKRRSVKSNKKED.

It belongs to the bacterial ribosomal protein bS6 family.

In terms of biological role, binds together with bS18 to 16S ribosomal RNA. This is Small ribosomal subunit protein bS6 from Bacteroides thetaiotaomicron (strain ATCC 29148 / DSM 2079 / JCM 5827 / CCUG 10774 / NCTC 10582 / VPI-5482 / E50).